The chain runs to 594 residues: Neuronal PAS domain-containing protein 1 (594 aa).

A bHLH domain is found at 45-98 (QRKEKSRNAARWRRGKENLEFFELAKLLPLPGAISSQLDKASIVRLSVTYLRLR). Positions 135–205 (EQHLGGHILQ…EQLGLRAASI (71 aa)) constitute a PAS 1 domain. The interval 206–237 (GPPTPPSVSSSSSSSSSSLVDTPEIEASPTEA) is disordered. A compositionally biased stretch (low complexity) spans 212–223 (SVSSSSSSSSSS). One can recognise a PAS 2 domain in the interval 294-360 (APLAELPLHG…IRQSHLDLLD (67 aa)). The region spanning 366–409 (TGYYRWLQRAGGFVWLQSVATVAGNGKSTGEHHVLWVSHVLSNA) is the PAC domain. The segment at 427–498 (QEEPSRPGPE…DPPAPPRPEF (72 aa)) is disordered. The span at 453–480 (DQDKDKDPQARGKRIKVEASPKEARGSE) shows a compositional bias: basic and acidic residues.

As to quaternary structure, efficient DNA binding requires dimerization with another bHLH protein. Interacts with ARNT; forms a heterodimer that binds core DNA sequence 5'-[AG]CGTG-3' within the hypoxia response element (HRE) leading to a transcriptional repressor on its target gene TH. Expressed in brain in inhibitory interneurons. Also found in spinal cord.

The protein resides in the nucleus. Functionally, may control regulatory pathways relevant to schizophrenia and to psychotic illness. May play a role in late central nervous system development by modulating EPO expression in response to cellular oxygen level. Forms a heterodimer that binds core DNA sequence 5'-TACGTG-3' within the hypoxia response element (HRE) leading to transcriptional repression on its target gene TH. The sequence is that of Neuronal PAS domain-containing protein 1 (Npas1) from Mus musculus (Mouse).